Consider the following 575-residue polypeptide: MKPIFDINETFEKQLKDLTSNVKSIQDNLLEEIITPNTKTEYLQRFLIDRFDKELFKKNVPIVSYEDIKPYLDRVVNGESSDVISARTITGFLLSSGTSGGAQKMMPWNNKYLDNLTFIYDLRMQVITKHVKGVEEGKGMMFLFTKQESMTPSGLPARVATSSYFKSDYFKNRPSNWYYSYTSPDEVILCPNNTESLYCHLLCGLVQRDEVVRTGSIFASVMVRAIEVLKNSWEELCSNIRSGHLSNWVTDLGCQNSVSLVLGGPRPELADTIEEICNQNSWKGIVKRLWPNTKYIETVVTGSMGQYVPMLNYYCNDLPLVSTTYGSSETTFGINLDPLCKPEDVSYTFMPNMSYFEFIPMDGGDKNDVVDLEDVKLGCTYEPVVTNFAGLYRMRVGDIVLVTGFYNNAPQFKFVRRENVVLSIDSDKTNEEDLFKAVSQAKLVLESSGLDLKDFTSYADTSTFPGHYVVYLEVDTKEGEEKETAQFELDEEALSTCCLVMEESLDNVYKRCRFKDGSIGPLEIRVVRQGTFDSLMDFFISQGASTGQYKTPRCIKSGKALQVLETCVVAKFFSI.

Positions 6–33 form a coiled coil; it reads DINETFEKQLKDLTSNVKSIQDNLLEEI. Residue 95 to 96 participates in AMP binding; it reads SS. Residue 120–123 coordinates salicylate; it reads YDLR. AMP-binding residues include T301, T324, S328, Y347, D398, and R417.

This sequence belongs to the IAA-amido conjugating enzyme family. In terms of assembly, interacts with the P.syringae pv. maculicola effector HopW1-1 (via C-terminus). Expressed in seedlings, mostly in cotyledons, leaves, hypocotyls and sporadically in roots. Not detected in unchallenged adult plants, except in flowers.

Its activity is regulated as follows. Specifically and reversibly inhibited by salicylic acid (SA). In terms of biological role, catalyzes the conjugation of specific amino acids (e.g. Glu and possibly His, Lys, and Met) to their preferred acyl substrates (e.g. 4-substituted benzoates), in a magnesium ion- and ATP-dependent manner. Can use 4-substituted benzoates such as 4-aminobenzoate (pABA), 4-fluorobenzoate and 4-hydroxybenzoate (4-HBA), and, to a lesser extent, benzoate, vanillate and trans-cinnamate, but not 2-substituted benzoates and salicylic acid (SA), as conjugating acyl substrates. Involved in both basal and induced resistance in a SA-dependent manner. Confers resistance to virulent and avirulent pathogens (at least bacteria and oomycetes), and promotes SA glucosides accumulation. Required for the establishment of hyper-sensitive response (HR) upon incompatible interaction and subsequent systemic acquired resistance (SAR). The chain is 4-substituted benzoates-glutamate ligase GH3.12 (GH3.12) from Arabidopsis thaliana (Mouse-ear cress).